The following is a 263-amino-acid chain: MARGPKKHLKRVAAPKHWMLDKLTGVFAPRPSTGPHKLRECLPLIVFLRNRLKYALTGDEVKKICMQRFIKIDGKVRVDVTYPAGFMDVISIEKTGEHFRLVYDTKGRFAVHRITVEEAKYKLCKVRKITVGVKGIPHLVTHDARTIRYPDPVIKVNDTVQIDLGTGKIINFIKFDTGNLCMVIGGANLGRVGVITNRERHPGSFDVVHVKDANGNSFATRLSNIFVIGNGNKPWISLPRGKGIRLTVAAERDKRLATKQSSG.

In terms of domain architecture, S4 RNA-binding spans 42–104 (LPLIVFLRNR…TGEHFRLVYD (63 aa)).

Belongs to the eukaryotic ribosomal protein eS4 family.

The protein is Small ribosomal subunit protein eS4 (RPS4Y1) of Pan paniscus (Pygmy chimpanzee).